A 577-amino-acid polypeptide reads, in one-letter code: Aspartate--tRNA ligase (577 aa).

E171 provides a ligand contact to L-aspartate. The tract at residues 195 to 198 (QLFK) is aspartate. An L-aspartate-binding site is contributed by R217. ATP contacts are provided by residues 217 to 219 (RDE) and Q226. H437 contacts L-aspartate. An ATP-binding site is contributed by E472. R479 serves as a coordination point for L-aspartate. Residue 524-527 (GFDR) participates in ATP binding.

Belongs to the class-II aminoacyl-tRNA synthetase family. Type 1 subfamily. In terms of assembly, homodimer.

Its subcellular location is the cytoplasm. The catalysed reaction is tRNA(Asp) + L-aspartate + ATP = L-aspartyl-tRNA(Asp) + AMP + diphosphate. Its function is as follows. Catalyzes the attachment of L-aspartate to tRNA(Asp) in a two-step reaction: L-aspartate is first activated by ATP to form Asp-AMP and then transferred to the acceptor end of tRNA(Asp). This Deinococcus geothermalis (strain DSM 11300 / CIP 105573 / AG-3a) protein is Aspartate--tRNA ligase.